Here is a 149-residue protein sequence, read N- to C-terminus: Protein-export protein SecB (149 aa).

It belongs to the SecB family. As to quaternary structure, homotetramer, a dimer of dimers. One homotetramer interacts with 1 SecA dimer.

It is found in the cytoplasm. Functionally, one of the proteins required for the normal export of preproteins out of the cell cytoplasm. It is a molecular chaperone that binds to a subset of precursor proteins, maintaining them in a translocation-competent state. It also specifically binds to its receptor SecA. In Acidithiobacillus ferrooxidans (strain ATCC 23270 / DSM 14882 / CIP 104768 / NCIMB 8455) (Ferrobacillus ferrooxidans (strain ATCC 23270)), this protein is Protein-export protein SecB.